The sequence spans 261 residues: Undecaprenyl-diphosphatase (261 aa).

Helical transmembrane passes span 16–36 (TEFL…LFGF), 40–60 (GLVF…VYFW), 82–102 (FWFL…LEDI), 107–127 (LRAP…LYLA), 140–160 (IRFG…IPGV), 183–203 (FSFL…MLKM), 211–231 (SFVL…WFLI), and 239–259 (FNIF…IALL).

The protein belongs to the UppP family.

It is found in the cell membrane. It carries out the reaction di-trans,octa-cis-undecaprenyl diphosphate + H2O = di-trans,octa-cis-undecaprenyl phosphate + phosphate + H(+). Functionally, catalyzes the dephosphorylation of undecaprenyl diphosphate (UPP). Confers resistance to bacitracin. This chain is Undecaprenyl-diphosphatase, found in Desulforudis audaxviator (strain MP104C).